Reading from the N-terminus, the 104-residue chain is Iron-sulfur cluster assembly protein CyaY (104 aa).

This sequence belongs to the frataxin family.

Its function is as follows. Involved in iron-sulfur (Fe-S) cluster assembly. May act as a regulator of Fe-S biogenesis. In Vibrio campbellii (strain ATCC BAA-1116), this protein is Iron-sulfur cluster assembly protein CyaY.